Here is a 549-residue protein sequence, read N- to C-terminus: Frizzled-7-A (549 aa).

A signal peptide spans 1–22 (MSSTVSLLFCCLFLQLCPSAQQ). The Extracellular segment spans residues 23–231 (YHGEKGISVP…EEEVRFARLW (209 aa)). An FZ domain is found at 32–151 (PDHGFCQPIS…HGAGEICVGQ (120 aa)). Intrachain disulfides connect Cys-37–Cys-98, Cys-45–Cys-91, Cys-82–Cys-119, Cys-108–Cys-148, and Cys-112–Cys-136. Asn-51 carries an N-linked (GlcNAc...) asparagine glycan. Asn-152 carries N-linked (GlcNAc...) asparagine glycosylation. Residues 232–252 (VGIWAILCCISTLFTVLTYLV) form a helical membrane-spanning segment. At 253–263 (DMRRFSYPERP) the chain is on the cytoplasmic side. Residues 264-284 (IIFLSGCYFMVAVAYTAGFLL) traverse the membrane as a helical segment. The Extracellular segment spans residues 285 to 311 (EERAVCVERFSEDSYRTVAQGTKKEGC). A helical transmembrane segment spans residues 312 to 332 (TILFMILYFFGMASSIWWVIL). The Cytoplasmic portion of the chain corresponds to 333–354 (SLTWFLSAGMKWGHEAIEANSQ). A helical membrane pass occupies residues 355–375 (YFHLAAWAVPAVKTITILAMG). Residues 376 to 398 (QVDGDVLSGVCYVGINSVDSLRG) are Extracellular-facing. The helical transmembrane segment at 399 to 419 (FVLAPLFVYLFIGTSFLLAGF) threads the bilayer. Residues 420 to 445 (VSLFRIRTIMKHDGTKTEKLEKLMVR) are Cytoplasmic-facing. The chain crosses the membrane as a helical span at residues 446-466 (IGVFSVMYTVPATIVLACYFY). The Extracellular portion of the chain corresponds to 467–503 (EQAFRDTWEKTWLVQTCKGYAVPCPNYNFAPMSPDFT). Residues 504–524 (VFMIKYLMTMIVGITSSFWIW) form a helical membrane-spanning segment. At 525 to 549 (SGKTLQSWRRFYHRLSNGSKGETAV) the chain is on the cytoplasmic side. Residues 527-532 (KTLQSW) carry the Lys-Thr-X-X-X-Trp motif, mediates interaction with the PDZ domain of Dvl family members motif. The short motif at 547 to 549 (TAV) is the PDZ-binding element.

This sequence belongs to the G-protein coupled receptor Fz/Smo family. In terms of assembly, interacts with wnt11 and sdc4. The extracellular domain interacts with the extracellular domain of pcdh8/papc. As to expression, expressed in the animal region of cleavage stage embryos. During gastrulation, broadly expressed on the dorsal side of the embryo in deep mesodermal cells surrounding the blastopore lip and in presumptive anterior neuroectoderm. During neurulation, becomes progressively more restricted to the dorsal epidermis, neural plate, and neural tube. Expressed in the cranial neural crest of neurulae and tailbud embryos as well as the pronephros of tailbud embryos. Localized to the brain of neurulae, tailbud embryos and tadpoles. In tadpoles, strongly expressed in the eye and developing heart.

The protein resides in the cell membrane. It localises to the endosome membrane. Its function is as follows. Receptor for Wnt proteins. Acts in both canonical and non-canonical Wnt pathways. Although different papers report differing Wnt preferences, wnt5a, wnt8b and wnt11 have been proposed as synergists. In the canonical Wnt pathway, acts via beta-catenin to promote the expression of the dorsal genes siamois, twin and nodal3 and to establish the dorsal axis of the embryo and induce dorsal mesoderm formation. In a non-canonical Wnt/planar cell polarity (PCP) pathway, acts with sdc4 and dvl2/dsh to regulate convergent extension cell movements during gastrulation. Triggers phosphorylation of dvl2/dsh and its translocation to the plasma membrane. In a third branch of Wnt signaling, acts in a non-canonical pathway via trimeric G proteins, and independently of dvl2/dsh, to recruit protein kinase C (PKC) to the membrane and thus activate PKC. PKC signaling controls cell sorting and tissue separation during gastrulation. The sequence is that of Frizzled-7-A (fzd7-a) from Xenopus laevis (African clawed frog).